The following is a 329-amino-acid chain: DNA-directed RNA polymerase subunit alpha (329 aa).

An alpha N-terminal domain (alpha-NTD) region spans residues 1-235 (MQGSVTEFLK…EQLDAFVDLR (235 aa)). Residues 249-329 (FDPILLRPVD…NWPPASIAED (81 aa)) are alpha C-terminal domain (alpha-CTD).

It belongs to the RNA polymerase alpha chain family. Homodimer. The RNAP catalytic core consists of 2 alpha, 1 beta, 1 beta' and 1 omega subunit. When a sigma factor is associated with the core the holoenzyme is formed, which can initiate transcription.

It carries out the reaction RNA(n) + a ribonucleoside 5'-triphosphate = RNA(n+1) + diphosphate. Its function is as follows. DNA-dependent RNA polymerase catalyzes the transcription of DNA into RNA using the four ribonucleoside triphosphates as substrates. The polypeptide is DNA-directed RNA polymerase subunit alpha (Mannheimia succiniciproducens (strain KCTC 0769BP / MBEL55E)).